The primary structure comprises 238 residues: Proteasome subunit beta type-6 (238 aa).

An N-acetylalanine modification is found at A2. A propeptide spans 2–33 (removed in mature form); it reads AAALAVRRAGSAPAFGPEALTPDWENREVSTG. The active-site Nucleophile is the T34. Position 68 is a phosphothreonine (T68).

The protein belongs to the peptidase T1B family. In terms of assembly, the 26S proteasome consists of a 20S proteasome core and two 19S regulatory subunits. The 20S proteasome core is a barrel-shaped complex made of 28 subunits that are arranged in four stacked rings. The two outer rings are each formed by seven alpha subunits, and the two inner rings are formed by seven beta subunits. The proteolytic activity is exerted by three beta-subunits PSMB5, PSMB6 and PSMB7.

The protein resides in the cytoplasm. Its subcellular location is the nucleus. It carries out the reaction Cleavage of peptide bonds with very broad specificity.. Its function is as follows. Component of the 20S core proteasome complex involved in the proteolytic degradation of most intracellular proteins. This complex plays numerous essential roles within the cell by associating with different regulatory particles. Associated with two 19S regulatory particles, forms the 26S proteasome and thus participates in the ATP-dependent degradation of ubiquitinated proteins. The 26S proteasome plays a key role in the maintenance of protein homeostasis by removing misfolded or damaged proteins that could impair cellular functions, and by removing proteins whose functions are no longer required. Associated with the PA200 or PA28, the 20S proteasome mediates ubiquitin-independent protein degradation. This type of proteolysis is required in several pathways including spermatogenesis (20S-PA200 complex) or generation of a subset of MHC class I-presented antigenic peptides (20S-PA28 complex). Within the 20S core complex, PSMB6 displays a peptidylglutamyl-hydrolyzing activity also termed postacidic or caspase-like activity, meaning that the peptides bond hydrolysis occurs directly after acidic residues. The protein is Proteasome subunit beta type-6 (Psmb6) of Mus musculus (Mouse).